The following is an 895-amino-acid chain: Ras and Rab interactor 2 (895 aa).

One can recognise an SH2 domain in the interval 97 to 190 (WLQLSLSEEE…VLPFTLKLPY (94 aa)). The interval 284 to 361 (LSGGLKRPST…KPTPIPPPRL (78 aa)) is disordered. A compositionally biased stretch (pro residues) spans 306–315 (SPPPRPPPPA). The segment covering 328–338 (TETQTSMPETV) has biased composition (polar residues). S366 bears the Phosphoserine mark. Disordered stretches follow at residues 373–442 (GAKT…SDSL) and 460–481 (SLED…KSKK). Low complexity predominate over residues 430-441 (SDMSISTSSSDS). S501 is subject to Phosphoserine. T509 is modified (phosphothreonine). The VPS9 domain maps to 618-757 (DGSWKQLKEN…IKNFQEEQAA (140 aa)). Residues 787–878 (FQNYLRVAFQ…FHFVYKRIKN (92 aa)) enclose the Ras-associating domain.

The protein belongs to the RIN (Ras interaction/interference) family. In terms of assembly, homotetramer; probably composed of anti-parallel linkage of two parallel dimers. Interacts with Ras. Interacts with RAB5B, with a much higher affinity for GTP-bound activated RAB5B. Does not interact with other members of the Rab family. Widely expressed. Expressed in heart, kidney, lung placenta. Expressed at low level in skeletal muscle, spleen and peripheral blood.

The protein resides in the cytoplasm. Ras effector protein. May function as an upstream activator and/or downstream effector for RAB5B in endocytic pathway. May function as a guanine nucleotide exchange (GEF) of RAB5B, required for activating the RAB5 proteins by exchanging bound GDP for free GTP. The polypeptide is Ras and Rab interactor 2 (RIN2) (Homo sapiens (Human)).